Here is a 423-residue protein sequence, read N- to C-terminus: UPF0229 protein PSPPH_0628 (423 aa).

Positions 65–110 (HHGRGGKQTVVHPGNKEFTTGEHIARPQGGGGGKGPGKAGNSGEGM) are disordered. Residues 92 to 107 (QGGGGGKGPGKAGNSG) are compositionally biased toward gly residues.

The protein belongs to the UPF0229 family.

This Pseudomonas savastanoi pv. phaseolicola (strain 1448A / Race 6) (Pseudomonas syringae pv. phaseolicola (strain 1448A / Race 6)) protein is UPF0229 protein PSPPH_0628.